We begin with the raw amino-acid sequence, 680 residues long: DNA-directed RNA polymerase subunit beta' (680 aa).

Positions 69, 71, 87, and 90 each coordinate Zn(2+). Aspartate 489, aspartate 491, and aspartate 493 together coordinate Mg(2+).

This sequence belongs to the RNA polymerase beta' chain family. RpoC1 subfamily. In terms of assembly, in plastids the minimal PEP RNA polymerase catalytic core is composed of four subunits: alpha, beta, beta', and beta''. When a (nuclear-encoded) sigma factor is associated with the core the holoenzyme is formed, which can initiate transcription. Mg(2+) serves as cofactor. It depends on Zn(2+) as a cofactor.

It localises to the plastid. It is found in the chloroplast. The enzyme catalyses RNA(n) + a ribonucleoside 5'-triphosphate = RNA(n+1) + diphosphate. Functionally, DNA-dependent RNA polymerase catalyzes the transcription of DNA into RNA using the four ribonucleoside triphosphates as substrates. The polypeptide is DNA-directed RNA polymerase subunit beta' (Cucumis sativus (Cucumber)).